The sequence spans 315 residues: Ribosomal RNA small subunit methyltransferase H (315 aa).

Residues 33-35 (GGH), Asp52, Phe84, Asp106, and Gln113 each bind S-adenosyl-L-methionine. The segment at 290–315 (PITASTSELENNNRSHSAKLRVAEKL) is disordered. Positions 292–304 (TASTSELENNNRS) are enriched in polar residues.

This sequence belongs to the methyltransferase superfamily. RsmH family.

The protein resides in the cytoplasm. The catalysed reaction is cytidine(1402) in 16S rRNA + S-adenosyl-L-methionine = N(4)-methylcytidine(1402) in 16S rRNA + S-adenosyl-L-homocysteine + H(+). In terms of biological role, specifically methylates the N4 position of cytidine in position 1402 (C1402) of 16S rRNA. This Lactobacillus helveticus (strain DPC 4571) protein is Ribosomal RNA small subunit methyltransferase H.